The sequence spans 42 residues: uncharacterized protein (42 aa).

This is an uncharacterized protein from Dictyostelium discoideum (Social amoeba).